Here is a 316-residue protein sequence, read N- to C-terminus: tRNA dimethylallyltransferase (316 aa).

Residue 17 to 24 (GPTASGKT) coordinates ATP. 19-24 (TASGKT) is a binding site for substrate. Interaction with substrate tRNA regions lie at residues 42-45 (DSAL), 166-170 (QRLSR), 247-252 (RCVGYR), and 280-287 (KRQITWLR).

The protein belongs to the IPP transferase family. In terms of assembly, monomer. Mg(2+) serves as cofactor.

The enzyme catalyses adenosine(37) in tRNA + dimethylallyl diphosphate = N(6)-dimethylallyladenosine(37) in tRNA + diphosphate. Catalyzes the transfer of a dimethylallyl group onto the adenine at position 37 in tRNAs that read codons beginning with uridine, leading to the formation of N6-(dimethylallyl)adenosine (i(6)A). In Escherichia coli O45:K1 (strain S88 / ExPEC), this protein is tRNA dimethylallyltransferase.